Reading from the N-terminus, the 207-residue chain is MANVTLYKQDGSENGKVELNDAIWAVEPNENVVFDAVVMQRDSLRQGTHAVKNRSAVSGGGRKPWRQKGTGRARQGSIRSPQWRGGGIVFGPTPRSYAYKLPKKVRRLAIKSVLSQKVLDSDLVVVDGLNFDAPKTKAFATVLDGLKVSDKALVVLEDGNEVAAKAARNLPNVKVVPAEGINVLDVVDYKKLILTQSALQKIEEVLA.

The disordered stretch occupies residues 45–78 (RQGTHAVKNRSAVSGGGRKPWRQKGTGRARQGSI).

This sequence belongs to the universal ribosomal protein uL4 family. As to quaternary structure, part of the 50S ribosomal subunit.

One of the primary rRNA binding proteins, this protein initially binds near the 5'-end of the 23S rRNA. It is important during the early stages of 50S assembly. It makes multiple contacts with different domains of the 23S rRNA in the assembled 50S subunit and ribosome. Functionally, forms part of the polypeptide exit tunnel. In Lacticaseibacillus paracasei (strain ATCC 334 / BCRC 17002 / CCUG 31169 / CIP 107868 / KCTC 3260 / NRRL B-441) (Lactobacillus paracasei), this protein is Large ribosomal subunit protein uL4.